The sequence spans 545 residues: Glucose-6-phosphate isomerase (545 aa).

Glu-351 (proton donor) is an active-site residue. Active-site residues include His-382 and Lys-510.

The protein belongs to the GPI family.

The protein resides in the cytoplasm. The catalysed reaction is alpha-D-glucose 6-phosphate = beta-D-fructose 6-phosphate. It functions in the pathway carbohydrate biosynthesis; gluconeogenesis. Its pathway is carbohydrate degradation; glycolysis; D-glyceraldehyde 3-phosphate and glycerone phosphate from D-glucose: step 2/4. Functionally, catalyzes the reversible isomerization of glucose-6-phosphate to fructose-6-phosphate. In Helicobacter pylori (strain P12), this protein is Glucose-6-phosphate isomerase.